Consider the following 605-residue polypeptide: DNA mismatch repair protein MutL (605 aa).

This sequence belongs to the DNA mismatch repair MutL/HexB family.

This protein is involved in the repair of mismatches in DNA. It is required for dam-dependent methyl-directed DNA mismatch repair. May act as a 'molecular matchmaker', a protein that promotes the formation of a stable complex between two or more DNA-binding proteins in an ATP-dependent manner without itself being part of a final effector complex. This is DNA mismatch repair protein MutL from Rhizobium meliloti (strain 1021) (Ensifer meliloti).